Consider the following 93-residue polypeptide: Putative pterin-4-alpha-carbinolamine dehydratase (93 aa).

It belongs to the pterin-4-alpha-carbinolamine dehydratase family.

It catalyses the reaction (4aS,6R)-4a-hydroxy-L-erythro-5,6,7,8-tetrahydrobiopterin = (6R)-L-erythro-6,7-dihydrobiopterin + H2O. This is Putative pterin-4-alpha-carbinolamine dehydratase from Mycolicibacterium vanbaalenii (strain DSM 7251 / JCM 13017 / BCRC 16820 / KCTC 9966 / NRRL B-24157 / PYR-1) (Mycobacterium vanbaalenii).